A 21-amino-acid chain; its full sequence is Peptide PGLa-R3 (21 aa).

A Leucine amide modification is found at Leu-21.

In terms of tissue distribution, expressed by the skin glands.

The protein localises to the secreted. Functionally, antimicrobial peptide. This chain is Peptide PGLa-R3, found in Xenopus ruwenzoriensis (Uganda clawed frog).